A 470-amino-acid chain; its full sequence is Pyoverdine export outer membrane protein OpmQ (470 aa).

Positions 1-18 are cleaved as a signal peptide; that stretch reads MTLPRHLCLLPLSLSLLA. The N-palmitoyl cysteine moiety is linked to residue cysteine 19. Residue cysteine 19 is the site of S-diacylglycerol cysteine attachment.

The protein belongs to the outer membrane factor (OMF) (TC 1.B.17) family. As to quaternary structure, part of the tripartite efflux system PvdRT-OpmQ, which is composed of an inner membrane component with both ATPase and permease domains, PvdT, a periplasmic membrane fusion protein, PvdR, and an outer membrane component, OpmQ.

It localises to the cell outer membrane. In terms of biological role, part of the tripartite efflux system PvdRT-OpmQ required for the secretion into the extracellular milieu of the siderophore pyoverdine (PVD), which is involved in iron acquisition. The system is responsible for export of newly synthesized PVD after the final steps of biosynthesis have taken place in the periplasm. It is also responsible for recycling of PVD after internalization of ferri-PVD into the periplasm by the outer-membrane receptor FpvA and release of iron from PVD, thus making PVD available for new cycles of iron uptake. Contributes to resistance against ampicillin. This chain is Pyoverdine export outer membrane protein OpmQ, found in Pseudomonas putida (strain ATCC 47054 / DSM 6125 / CFBP 8728 / NCIMB 11950 / KT2440).